Consider the following 177-residue polypeptide: Protein GrpE (177 aa).

This sequence belongs to the GrpE family. As to quaternary structure, homodimer. The cofactor is K(+).

It is found in the cytoplasm. Participates actively in the response to hyperosmotic and heat shock by preventing the aggregation of stress-denatured proteins, in association with DnaK and GrpE. It is the nucleotide exchange factor for DnaK and may function as a thermosensor. Unfolded proteins bind initially to DnaJ; upon interaction with the DnaJ-bound protein, DnaK hydrolyzes its bound ATP, resulting in the formation of a stable complex. GrpE releases ADP from DnaK; ATP binding to DnaK triggers the release of the substrate protein, thus completing the reaction cycle. Several rounds of ATP-dependent interactions between DnaJ, DnaK and GrpE are required for fully efficient folding. The polypeptide is Protein GrpE (Thermus thermophilus (strain ATCC 27634 / DSM 579 / HB8)).